The chain runs to 204 residues: Altered inheritance of mitochondria protein 20 (204 aa).

The chain crosses the membrane as a helical span at residues valine 6–phenylalanine 26.

This sequence belongs to the SKG1 family.

The protein localises to the vacuole membrane. In terms of biological role, involved in cell cycle progression and surviving DNA damage. The polypeptide is Altered inheritance of mitochondria protein 20 (AIM20) (Saccharomyces cerevisiae (strain RM11-1a) (Baker's yeast)).